A 443-amino-acid chain; its full sequence is Tol-Pal system protein TolB (443 aa).

Residues 1-33 (MKIGIINTKIRTVFSAFACMIAASLVCTMPARA) form the signal peptide.

This sequence belongs to the TolB family. The Tol-Pal system is composed of five core proteins: the inner membrane proteins TolA, TolQ and TolR, the periplasmic protein TolB and the outer membrane protein Pal. They form a network linking the inner and outer membranes and the peptidoglycan layer.

It localises to the periplasm. Part of the Tol-Pal system, which plays a role in outer membrane invagination during cell division and is important for maintaining outer membrane integrity. The sequence is that of Tol-Pal system protein TolB from Brucella ovis (strain ATCC 25840 / 63/290 / NCTC 10512).